Consider the following 80-residue polypeptide: Acyl carrier protein (80 aa).

A Carrier domain is found at 4 to 79 (EAILEKVRSI…DAVKYIEEKQ (76 aa)). Ser39 carries the post-translational modification O-(pantetheine 4'-phosphoryl)serine.

The protein belongs to the acyl carrier protein (ACP) family. In terms of processing, 4'-phosphopantetheine is transferred from CoA to a specific serine of apo-ACP by AcpS. This modification is essential for activity because fatty acids are bound in thioester linkage to the sulfhydryl of the prosthetic group.

The protein localises to the cytoplasm. It functions in the pathway lipid metabolism; fatty acid biosynthesis. Functionally, carrier of the growing fatty acid chain in fatty acid biosynthesis. The chain is Acyl carrier protein from Prochlorococcus marinus (strain NATL1A).